A 360-amino-acid polypeptide reads, in one-letter code: Probable neutral protease 2 homolog MCYG_04257 (360 aa).

Residues 1-17 (MQLIAFLAALGVPVAFA) form the signal peptide. Residues 18–182 (ATIPSVPLNH…KVKAGSIDKR (165 aa)) constitute a propeptide that is removed on maturation. A disulfide bridge connects residues Cys-190 and Cys-261. The N-linked (GlcNAc...) asparagine glycan is linked to Asn-262. Cystine bridges form between Cys-268–Cys-286 and Cys-300–Cys-360. Residue His-311 participates in Zn(2+) binding. The active site involves Glu-312. His-315 and Asp-326 together coordinate Zn(2+).

Belongs to the peptidase M35 family. The cofactor is Zn(2+).

The protein localises to the secreted. The catalysed reaction is Preferential cleavage of bonds with hydrophobic residues in P1'. Also 3-Asn-|-Gln-4 and 8-Gly-|-Ser-9 bonds in insulin B chain.. Probable secreted metalloprotease that shows high activities on basic nuclear substrates such as histone and protamine. May be involved in virulence. The polypeptide is Probable neutral protease 2 homolog MCYG_04257 (Arthroderma otae (strain ATCC MYA-4605 / CBS 113480) (Microsporum canis)).